The chain runs to 359 residues: 3-dehydroshikimate dehydratase (359 aa).

The protein belongs to the bacterial two-domain DSD family. In terms of assembly, monomer.

It carries out the reaction 3-dehydroshikimate = 3,4-dihydroxybenzoate + H2O. It participates in aromatic compound metabolism; 3,4-dihydroxybenzoate biosynthesis; 3,4-dihydroxybenzoate from 3-dehydroquinate: step 2/2. With respect to regulation, divalent cations such as Mg(2+), but also MO(2+), Mn(2+), Ba(2+), and Co(2+) activate the enzyme, whereas monovalent cations as K(+), Na(+), and NH4(+) decrease its activity slightly. In terms of biological role, 3-dehydroshikimate dehydratase; part of the qa gene cluster that mediates the catabolism of quinic acid (QA) and as such, allows the use of QA as a sole carbon source. Catalyzes the third reaction in the inducible quinic acid catabolic pathway by converting dehydroshikimate to protocatechuate. The qa cluster encodes 3 inducible enymes (qa-2, qa-3 and qa-4) catalyzing the first three reactions in the catabolism of quinic acid to protocatechuic acid (also known as 3,4-Dihydroxybenzoic acid). The chain is 3-dehydroshikimate dehydratase from Neurospora crassa (strain ATCC 24698 / 74-OR23-1A / CBS 708.71 / DSM 1257 / FGSC 987).